A 524-amino-acid chain; its full sequence is Sexual development regulator velC (524 aa).

4 disordered regions span residues 114 to 195 (NRVL…PVHS), 322 to 349 (PGSG…MSSY), 380 to 413 (VDEE…HRFR), and 503 to 524 (GMGK…ARVE). 2 stretches are compositionally biased toward polar residues: residues 131–153 (TTGS…ENAG) and 178–195 (LDSQ…PVHS). Residues 248–500 (SSSSRYRLFI…ELGFVELKTR (253 aa)) form the Velvet domain. Residues 393-402 (PSSTDDSTYD) are compositionally biased toward polar residues.

Belongs to the velvet family. VelC subfamily. In terms of assembly, interacts with vosA.

The protein resides in the nucleus. Functionally, velvet-domain-containing protein that acts as a positive regulator of sexual development. Positively regulates the production of the sexual fruiting bodies called cleistothecia. This is Sexual development regulator velC from Emericella nidulans (strain FGSC A4 / ATCC 38163 / CBS 112.46 / NRRL 194 / M139) (Aspergillus nidulans).